Reading from the N-terminus, the 215-residue chain is MKALFEARINFIVTEKQIKRVRAPNEDWLQDDEVDVVLRFSNVVKLMNGIQNVQKLYLTADTIEVLSLCCESVPLFNNLKTLGITSEEGRGWQAMPVLGLLHYMTDKCGDACDCISREDKGRSLTSCPVKKLEIRGFRGTMKEMTMIKHFLVYFPCLKEMNIYVEEYDPTELRFPQVSKVIIQMMEEYNKLSSCNVQLLITDYLSEKWTAAGRIL.

The 78-residue stretch at 122-199 folds into the FBD domain; that stretch reads RSLTSCPVKK…KLSSCNVQLL (78 aa).

In Arabidopsis thaliana (Mouse-ear cress), this protein is FBD domain-containing protein At3g58975.